Here is a 187-residue protein sequence, read N- to C-terminus: Large ribosomal subunit protein eL18y (187 aa).

A disordered region spans residues 151 to 187 (FGPAPGVPHSHSKPYVRAKGRKFEKARGKRKSRGFKV). 2 stretches are compositionally biased toward basic residues: residues 160–170 (SHSKPYVRAKG) and 177–187 (RGKRKSRGFKV).

The protein belongs to the eukaryotic ribosomal protein eL18 family. In terms of assembly, interacts with NIK1. Interacts directly with EXA1. In terms of tissue distribution, ubiquitous.

The protein resides in the cytoplasm. This Arabidopsis thaliana (Mouse-ear cress) protein is Large ribosomal subunit protein eL18y (RPL18B).